Reading from the N-terminus, the 816-residue chain is Phosphatidylinositol 4-kinase beta (816 aa).

Disordered stretches follow at residues M1–L30, E101–R120, and R250–S318. Residue G2 is modified to N-acetylglycine. An interaction with ACBD3 region spans residues G2–I68. Positions T10–L30 are enriched in low complexity. The region spanning C52–S242 is the PIK helical domain. S258 is subject to Phosphoserine. At T263 the chain carries Phosphothreonine. Phosphoserine is present on residues S266, S275, S277, S284, and S294. Polar residues-rich tracts occupy residues D278 to K297 and S306 to S318. Position 428 is a phosphoserine (S428). T438 carries the phosphothreonine modification. Position 511 is a phosphoserine (S511). 2 positions are modified to phosphothreonine: T517 and T519. The region spanning E535–T801 is the PI3K/PI4K catalytic domain. The tract at residues V541–G547 is G-loop. Positions Q668–N676 are catalytic loop. The activation loop stretch occupies residues H687–T711.

This sequence belongs to the PI3/PI4-kinase family. Type III PI4K subfamily. In terms of assembly, interacts with ARF1 and ARF3 in the Golgi complex, but not with ARF4, ARF5 or ARF6. Interacts with NCS1/FREQ in a calcium-independent manner. Interacts with CALN1/CABP8 and CALN2/CABP7; in a calcium-dependent manner; this interaction competes with NCS1/FREQ binding. Interacts with ACBD3. Interacts with ARMH3, YWHAB, YWHAE, YWHAG, YWHAH, YWHAQ, YWHAZ and SFN. Interacts with GGA2 (via VHS domain); the interaction is important for PI4KB location at the Golgi apparatus membrane. Interacts with ATG9A. The cofactor is Mg(2+). It depends on Mn(2+) as a cofactor.

The protein resides in the endomembrane system. The protein localises to the mitochondrion outer membrane. It localises to the rough endoplasmic reticulum membrane. It is found in the golgi apparatus. Its subcellular location is the golgi apparatus membrane. It catalyses the reaction a 1,2-diacyl-sn-glycero-3-phospho-(1D-myo-inositol) + ATP = a 1,2-diacyl-sn-glycero-3-phospho-(1D-myo-inositol 4-phosphate) + ADP + H(+). Its activity is regulated as follows. Inhibited by wortmannin. Increased kinase activity upon interaction with NCS1/FREQ. In terms of biological role, phosphorylates phosphatidylinositol (PI) in the first committed step in the production of the second messenger inositol-1,4,5,-trisphosphate (PIP). May regulate Golgi disintegration/reorganization during mitosis, possibly via its phosphorylation. Involved in Golgi-to-plasma membrane trafficking. May play an important role in the inner ear development. The chain is Phosphatidylinositol 4-kinase beta (Pi4kb) from Mus musculus (Mouse).